Here is a 229-residue protein sequence, read N- to C-terminus: MPGLTIGDTVPNLELDSTHGKIRIHDYVGDGYAIIFSHPADFTPVCTTEMAAMAGYAKEFEKRGVKLLGISCDDVESHRQWTKDVEAYGGKQQQQQATTTKVTFPILADPARDAIRQLNMVDPDEKDAAGRSMPSRALHVVGPDKAVKLSFLYPATTGRNMDEVLRAVDSLLTAAKHGGKVATPANWKPGECAVIAPGVSDEEARKMFPQGFETADLPSKKGYLRFTKV.

The Thioredoxin domain occupies 4-173 (LTIGDTVPNL…VLRAVDSLLT (170 aa)). Cys-46 serves as the catalytic Cysteine sulfenic acid (-SOH) intermediate. A Bipartite nuclear localization signal motif is present at residues 205-228 (RKMFPQGFETADLPSKKGYLRFTK).

This sequence belongs to the peroxiredoxin family. Prx6 subfamily.

It localises to the nucleus. The protein resides in the cytoplasm. It catalyses the reaction a hydroperoxide + [thioredoxin]-dithiol = an alcohol + [thioredoxin]-disulfide + H2O. In terms of biological role, thiol-specific peroxidase that catalyzes the reduction of hydrogen peroxide and organic hydroperoxides to water and alcohols, respectively. Seems to contribute to the inhibition of germination during stress. This chain is 1-Cys peroxiredoxin PER1 (PER1), found in Zea mays (Maize).